A 396-amino-acid polypeptide reads, in one-letter code: MAKAKFERTKPHCNIGTIGHVDHGKTSLTAAITKVLAETGGATFTAYDQIDKAPEEKARGITISTAHVEYETQNRHYAHVDCPGHADYVKNMITGAAQMDGAILVVSAADGPMPQTREHILLARQVGVPALVVFLNKCDMVDDPELLELVEMEVRELLSKYDFPGDDIPIVKGSALAALENSDAKLGHDAILELMRQVDAYIPQPERPIDQPFLMPVEDVFSISGRGTVVTGRVERGILKVGDEIEIVGIRDTQKTTCTGVEMFRKLLDQGQAGDNIGALLRGTKREDVERGQVLCKPGSVKPHTKFKAEAYILTKEEGGRHTPFFTNYRPQFYFRTTDVTGVVHLPEGTEMVMPGDNIAMEVHLIVPIAMEEKLRFAIREGGRTVGAGVVAAIIE.

Positions 10 to 206 (KPHCNIGTIG…QVDAYIPQPE (197 aa)) constitute a tr-type G domain. The tract at residues 19–26 (GHVDHGKT) is G1. Residue 19–26 (GHVDHGKT) participates in GTP binding. Thr26 contacts Mg(2+). The G2 stretch occupies residues 60–64 (GITIS). The interval 81–84 (DCPG) is G3. Residues 81-85 (DCPGH) and 136-139 (NKCD) contribute to the GTP site. The interval 136 to 139 (NKCD) is G4. A G5 region spans residues 174–176 (SAL).

This sequence belongs to the TRAFAC class translation factor GTPase superfamily. Classic translation factor GTPase family. EF-Tu/EF-1A subfamily. Monomer.

It is found in the cytoplasm. It catalyses the reaction GTP + H2O = GDP + phosphate + H(+). In terms of biological role, GTP hydrolase that promotes the GTP-dependent binding of aminoacyl-tRNA to the A-site of ribosomes during protein biosynthesis. This chain is Elongation factor Tu, found in Rhodopseudomonas palustris (strain ATCC BAA-98 / CGA009).